The following is a 968-amino-acid chain: Catenin delta-1 (968 aa).

Met1 is subject to N-acetylmethionine. The necessary and sufficient for interaction with CCDC85B stretch occupies residues 1-357 (MDDSEVESTA…ASLDSLRKGG (357 aa)). Ser4 carries the phosphoserine modification. The stretch at 10–46 (ASILASVKEQEAQFEKLTRALEEERRHVSAQLERVRV) forms a coiled coil. Ser47 carries the post-translational modification Phosphoserine. Thr59 is subject to Phosphothreonine. Position 112 is a phosphotyrosine; by FYN (Tyr112). Residue Ser125 is modified to Phosphoserine. Tyr217 and Tyr221 each carry phosphotyrosine. Residue Ser225 is modified to Phosphoserine. A Phosphotyrosine modification is found at Tyr228. Residues Ser230 and Ser252 each carry the phosphoserine modification. Tyr257 carries the phosphotyrosine modification. 2 positions are modified to phosphoserine: Ser268 and Ser269. Tyr280 is modified (phosphotyrosine). Residue Ser288 is modified to Phosphoserine; by PAK5. At Tyr291 the chain carries Phosphotyrosine. The short motif at 299-306 (MSDYGTAR) is the Nuclear localization signal (NLS) element. Ser300 is modified (phosphoserine). Thr304 is subject to Phosphothreonine. Residues Ser320, Ser346, Ser349, and Ser352 each carry the phosphoserine modification. ARM repeat units follow at residues 358-395 (PPPP…HLCY), 398-437 (DKVK…NISF), 441-475 (QDNK…ITGT), and 476-516 (LWNL…NEDC). Lys421 participates in a covalent cross-link: Glycyl lysine isopeptide (Lys-Gly) (interchain with G-Cter in SUMO2). Residue Lys517 forms a Glycyl lysine isopeptide (Lys-Gly) (interchain with G-Cter in SUMO2) linkage. The short motif at 521–528 (IEWESVLT) is the Nuclear localization signal (NLS) element. ARM repeat units follow at residues 534–573 (LRNV…DSDS), 583–624 (LRNL…AKKG), 653–693 (ARGY…NLCA), 700–739 (RYIR…NLAV), 740–780 (DARN…SILN), and 781–826 (TINE…ALVL). Ile566, Asp572, Ser587, and Glu593 each carry phosphothreonine. Residues 568–575 (QKDSDSKL) carry the Nuclear localization signal (NLS) motif. Ser617 bears the Phosphoserine mark. The Nuclear localization signal (NLS) signature appears at 622-629 (KKGKDEWF). Ser713 carries the post-translational modification Phosphoserine. Glu788, Lys794, and Asn809 each carry phosphothreonine. Ser811 carries the phosphoserine modification. Phosphothreonine is present on residues Ser815, Leu835, and Lys841. Residue Ser847 is modified to Phosphoserine. The disordered stretch occupies residues 855-944 (NASRSQSSHS…LMQDEGQESL (90 aa)). At Ala856 the chain carries Phosphothreonine. A phosphoserine mark is found at Ser857, Ser859, and Ser861. Position 862 is a phosphothreonine (Ser862). Ser864 bears the Phosphoserine mark. A Phosphotyrosine modification is found at Tyr865. Position 868 is a phosphoserine (Ser868). At Thr869 the chain carries Phosphothreonine. Over residues 875-888 (RNQKSDKKPDREEI) the composition is skewed to basic and acidic residues. A Phosphoserine modification is found at Ser879. Lys882 participates in a covalent cross-link: Glycyl lysine isopeptide (Lys-Gly) (interchain with G-Cter in SUMO2). A phosphothreonine mark is found at Gln889 and Ser895. The segment covering 889 to 908 (QMSNMGSNTKSLDNNYSTPN) has biased composition (polar residues). Position 899 is a phosphoserine (Ser899). At Tyr904 the chain carries Phosphotyrosine. Phosphothreonine occurs at positions 906, 910, and 916. Residues 909-922 (ERGDHNRTLDRSGD) show a composition bias toward basic and acidic residues. Phosphoserine occurs at positions 920 and 943.

It belongs to the beta-catenin family. Belongs to a multiprotein cell-cell adhesion complex that also contains E-cadherin/CDH1, alpha-catenin/CTNNA1, beta-catenin/CTNNB1, and gamma-catenin/JUP. Component of a cadherin:catenin adhesion complex composed of at least of CDH26, beta-catenin/CTNNB1, alpha-catenin/CTNNA1 and p120 catenin/CTNND1. Binds to the C-terminal fragment of PSEN1 and mutually competes for CDH1. Interacts with ZBTB33. Interacts with GLIS2. Interacts with FER. Interacts with NANOS1 (via N-terminal region). Interacts (via N-terminus) with GNA12; the interaction regulates CDH1-mediated cell-cell adhesion. Interacts with GNA13. Interacts with CCDC85B. Interacts with PLPP3; negatively regulates the PLPP3-mediated stabilization of CTNNB1. Interacts with DSG3; the interaction facilitates DSG3 localization and retention at cell-cell junctions. Interacts with CTNND1/p120-catenin; the interaction controls CADH5 endocytosis. In terms of processing, phosphorylated by FER and other protein-tyrosine kinases. Phosphorylated at Ser-288 by PAK5. Dephosphorylated by PTPRJ. As to expression, expressed in vascular endothelium. Melanocytes and melanoma cells primarily express the long isoform 1A, whereas keratinocytes express shorter isoforms, especially 3A. The shortest isoform 4A, is detected in normal keratinocytes and melanocytes, and generally lost from cells derived from squamous cell carcinomas or melanomas. The C-terminal alternatively spliced exon B is present in the p120ctn transcripts in the colon, intestine and prostate, but lost in several tumor tissues derived from these organs.

It localises to the cell junction. The protein resides in the adherens junction. Its subcellular location is the cytoplasm. The protein localises to the nucleus. It is found in the cell membrane. In terms of biological role, key regulator of cell-cell adhesion that associates with and regulates the cell adhesion properties of both C-, E- and N-cadherins, being critical for their surface stability. Promotes localization and retention of DSG3 at cell-cell junctions, via its interaction with DSG3. Beside cell-cell adhesion, regulates gene transcription through several transcription factors including ZBTB33/Kaiso2 and GLIS2, and the activity of Rho family GTPases and downstream cytoskeletal dynamics. Implicated both in cell transformation by SRC and in ligand-induced receptor signaling through the EGF, PDGF, CSF-1 and ERBB2 receptors. The chain is Catenin delta-1 from Homo sapiens (Human).